Consider the following 148-residue polypeptide: Cdc42 effector protein 5 (148 aa).

Disordered regions lie at residues 1–89 and 111–148; these read MPVL…DPLL and RPEAAAAKPDAEPRPGTQPPQARCRPNADLELNDVIGL. The 15-residue stretch at 23–37 folds into the CRIB domain; that stretch reads ISAPLGDFRHTLHVG. Arg-38 bears the Omega-N-methylarginine mark. Over residues 55-76 the composition is skewed to pro residues; sequence GPPPEPRAPPAGAPRSPPPPAV. A compositionally biased stretch (low complexity) spans 77–87; the sequence is PQSAAPSPADP.

It belongs to the BORG/CEP family. Interacts with CDC42, in a GTP-dependent manner, and with SEPT7.

It is found in the endomembrane system. Its subcellular location is the cytoplasm. It localises to the cytoskeleton. In terms of biological role, probably involved in the organization of the actin cytoskeleton. May act downstream of CDC42 to induce actin filament assembly leading to cell shape changes. Induces pseudopodia formation in fibroblasts. Inhibits MAPK8 independently of CDC42 binding. Controls septin organization and this effect is negatively regulated by CDC42. In Homo sapiens (Human), this protein is Cdc42 effector protein 5 (CDC42EP5).